The following is a 71-amino-acid chain: Large ribosomal subunit protein uL29 (71 aa).

This sequence belongs to the universal ribosomal protein uL29 family.

This chain is Large ribosomal subunit protein uL29, found in Rickettsia akari (strain Hartford).